The following is a 119-amino-acid chain: Immunoglobulin heavy variable 3-15 (119 aa).

A signal peptide spans 1 to 19 (MEFGLSWIFLAAILKGVQC). The segment at 20–44 (EVQLVESGGGLVKPGGSLRLSCAAS) is framework-1. Positions 20 to 119 (EVQLVESGGG…EDTAVYYCTT (100 aa)) constitute an Ig-like domain. Cysteines 41 and 117 form a disulfide. Residues 45–52 (GFTFSNAW) form a complementarity-determining-1 region. A framework-2 region spans residues 53–69 (MSWVRQAPGKGLEWVGR). Residues 70–79 (IKSKTDGGTT) are complementarity-determining-2. The tract at residues 80–117 (DYAAPVKGRFTISRDDSKNTLYLQMNSLKTEDTAVYYC) is framework-3. A complementarity-determining-3 region spans residues 118 to 119 (TT).

Immunoglobulins are composed of two identical heavy chains and two identical light chains; disulfide-linked.

The protein localises to the secreted. Its subcellular location is the cell membrane. In terms of biological role, v region of the variable domain of immunoglobulin heavy chains that participates in the antigen recognition. Immunoglobulins, also known as antibodies, are membrane-bound or secreted glycoproteins produced by B lymphocytes. In the recognition phase of humoral immunity, the membrane-bound immunoglobulins serve as receptors which, upon binding of a specific antigen, trigger the clonal expansion and differentiation of B lymphocytes into immunoglobulins-secreting plasma cells. Secreted immunoglobulins mediate the effector phase of humoral immunity, which results in the elimination of bound antigens. The antigen binding site is formed by the variable domain of one heavy chain, together with that of its associated light chain. Thus, each immunoglobulin has two antigen binding sites with remarkable affinity for a particular antigen. The variable domains are assembled by a process called V-(D)-J rearrangement and can then be subjected to somatic hypermutations which, after exposure to antigen and selection, allow affinity maturation for a particular antigen. In Homo sapiens (Human), this protein is Immunoglobulin heavy variable 3-15.